The sequence spans 312 residues: NAD(P)(+)--arginine ADP-ribosyltransferase 2 (312 aa).

Residues 1-20 (MELLALRWVLLAGTLLSTSA) form the signal peptide. A propeptide spanning residues 21–31 (ASSALQEGDLG) is cleaved from the precursor. 2 cysteine pairs are disulfide-bonded: cysteine 51/cysteine 260 and cysteine 159/cysteine 208. Positions 71–256 (YAYAVGWRKA…IYLRSKGKMS (186 aa)) constitute a TR mART core domain. NAD(+)-binding residues include tyrosine 108, arginine 164, and glutamine 183. Residue arginine 164 is part of the active site. Residue serine 186 is part of the active site. Residue serine 217 coordinates NAD(+). The active site involves glutamate 224. Positions 267 to 312 (GGQWGRGHQEVGLGLSPGLALPVLPCSNCSCWGSGHRAGDPIPAAV) are excised as a propeptide.

This sequence belongs to the Arg-specific ADP-ribosyltransferase family.

It is found in the secreted. It localises to the extracellular space. It carries out the reaction L-arginyl-[protein] + NAD(+) = N(omega)-(ADP-D-ribosyl)-L-arginyl-[protein] + nicotinamide + H(+). The sequence is that of NAD(P)(+)--arginine ADP-ribosyltransferase 2 from Gallus gallus (Chicken).